The sequence spans 300 residues: Protoheme IX farnesyltransferase 1 (300 aa).

Helical transmembrane passes span Val-28–Val-48, Val-50–Tyr-70, Ala-106–Leu-126, Ile-150–Gly-170, Ala-176–Ile-196, Cys-222–Met-242, Cys-243–Trp-263, and Phe-280–Ser-300.

It belongs to the UbiA prenyltransferase family. Protoheme IX farnesyltransferase subfamily.

Its subcellular location is the cell inner membrane. It carries out the reaction heme b + (2E,6E)-farnesyl diphosphate + H2O = Fe(II)-heme o + diphosphate. It participates in porphyrin-containing compound metabolism; heme O biosynthesis; heme O from protoheme: step 1/1. Functionally, converts heme B (protoheme IX) to heme O by substitution of the vinyl group on carbon 2 of heme B porphyrin ring with a hydroxyethyl farnesyl side group. In Shewanella loihica (strain ATCC BAA-1088 / PV-4), this protein is Protoheme IX farnesyltransferase 1.